An 88-amino-acid chain; its full sequence is MTFRNGGRLMRGRGGRRKVCEFSRLGILPDYKDPERLRRFLGPTGKILPRRRTGLTAKMQRRLTIAIKRARHMALLPFVERSVTDRRR.

It belongs to the bacterial ribosomal protein bS18 family. Part of the 30S ribosomal subunit. Forms a tight heterodimer with protein bS6.

In terms of biological role, binds as a heterodimer with protein bS6 to the central domain of the 16S rRNA, where it helps stabilize the platform of the 30S subunit. This Roseiflexus castenholzii (strain DSM 13941 / HLO8) protein is Small ribosomal subunit protein bS18B.